Here is a 348-residue protein sequence, read N- to C-terminus: Centromere protein L (348 aa).

The protein belongs to the CENP-L/IML3 family.

It localises to the nucleus. It is found in the chromosome. Its subcellular location is the centromere. In terms of biological role, probable component of a centromeric complex involved in assembly of kinetochore proteins, mitotic progression and chromosome segregation. In Xenopus tropicalis (Western clawed frog), this protein is Centromere protein L (cenpl).